The following is a 358-amino-acid chain: MAEGERQPPPDSSEEAPPATQNFIIPKKEIHTVPDMGKWKRSQAYADYIGFILTLNEGVKGKKLTFEYRVSEMWNEVHEEKEQAAKQSVSCDECIPLPRAGHCAPSEAIEKLVALLNTLDRWIDETPPVDQPSRFGNKAYRTWYAKLDEEAENLVATVVPTHLAAAVPEVAVYLKESVGNSTRIDYGTGHEAAFAAFLCCLCKIGVLRVDDQIAIVFKVFNRYLEVMRKLQKTYRMEPAGSQGVWGLDDFQFLPFIWGSSQLIDHPYLEPRHFVDEKAVNENHKDYMFLECILFITEMKTGPFAEHSNQLWNISAVPSWSKVNQGLIRMYKAECLEKFPVIQHFKFGSLLPIHPVTSG.

A disordered region spans residues 1–20; it reads MAEGERQPPPDSSEEAPPAT. Residue alanine 2 is modified to N-acetylalanine. Residues arginine 183, threonine 188, and glycine 189 each coordinate ATP. 2 residues coordinate Mg(2+): glycine 243 and aspartate 249. ATP-binding residues include proline 339, glutamine 342, and histidine 343.

This sequence belongs to the PTPA-type PPIase family. Associates with PP2A heterodimeric core enzyme PP2A(D), composed of a 36 kDa catalytic subunit (subunit C) and a 65 kDa constant regulatory subunit (PR65 or subunit A). Interacts with the catalytic subunit PPP2CA (via C-terminus). Interacts with PPP2CB. In terms of tissue distribution, widely expressed.

It is found in the cytoplasm. It localises to the nucleus. The catalysed reaction is [protein]-peptidylproline (omega=180) = [protein]-peptidylproline (omega=0). Functionally, PPIases accelerate the folding of proteins. It catalyzes the cis-trans isomerization of proline imidic peptide bonds in oligopeptides. Acts as a regulatory subunit for serine/threonine-protein phosphatase 2A (PP2A). Modulates PP2A activity or substrate specificity, probably by inducing a conformational change in the catalytic subunit, a proposed direct target of the PPIase. Can reactivate inactive phosphatase PP2A-phosphatase methylesterase complexes (PP2A(i)) in presence of ATP and Mg(2+). Reversibly stimulates the variable phosphotyrosyl phosphatase activity of PP2A core heterodimer PP2A(D) in presence of ATP and Mg(2+) (in vitro). The phosphotyrosyl phosphatase activity is dependent of an ATPase activity of the PP2A(D):PPP2R4 complex. Is involved in apoptosis; the function appears to be independent from PP2A. The chain is Serine/threonine-protein phosphatase 2A activator from Homo sapiens (Human).